The following is a 232-amino-acid chain: MSARDRLIVGLDLPTLAEAEKIVSALGEEVLFYKIGYQLAFAGGLDFARDLAASGKQVFLDMKLLDIDNTVAKGVENIVKMGVSMLTLHAYPKAMKSAVEAARGSNLCLLAVTVLTSMDEQDVMDAGYNYDPQSLVLRRAEQAHAAGMGGIVCSAAEAAAVRKIIGGDMALVTPGIRPAGAEKGDQKRVMTPADALAAGSSHLVVGRPIVAAPDPLAASRAILAEMESALSG.

Substrate is bound by residues Asp-12, Lys-34, 61–70, Thr-116, Arg-177, Gln-186, Gly-206, and Arg-207; that span reads DMKLLDIDNT. The Proton donor role is filled by Lys-63.

Belongs to the OMP decarboxylase family. Type 1 subfamily. In terms of assembly, homodimer.

It carries out the reaction orotidine 5'-phosphate + H(+) = UMP + CO2. The protein operates within pyrimidine metabolism; UMP biosynthesis via de novo pathway; UMP from orotate: step 2/2. Catalyzes the decarboxylation of orotidine 5'-monophosphate (OMP) to uridine 5'-monophosphate (UMP). The chain is Orotidine 5'-phosphate decarboxylase from Sinorhizobium medicae (strain WSM419) (Ensifer medicae).